The sequence spans 378 residues: Erythronate-4-phosphate dehydrogenase (378 aa).

Residues Ser-45 and Thr-66 each contribute to the substrate site. 2 residues coordinate NAD(+): Asp-146 and Thr-175. Arg-208 is a catalytic residue. Asp-232 contributes to the NAD(+) binding site. Glu-237 is an active-site residue. The active-site Proton donor is the His-254. Gly-257 serves as a coordination point for NAD(+). Residue Tyr-258 coordinates substrate.

This sequence belongs to the D-isomer specific 2-hydroxyacid dehydrogenase family. PdxB subfamily. Homodimer.

Its subcellular location is the cytoplasm. The enzyme catalyses 4-phospho-D-erythronate + NAD(+) = (R)-3-hydroxy-2-oxo-4-phosphooxybutanoate + NADH + H(+). It participates in cofactor biosynthesis; pyridoxine 5'-phosphate biosynthesis; pyridoxine 5'-phosphate from D-erythrose 4-phosphate: step 2/5. In terms of biological role, catalyzes the oxidation of erythronate-4-phosphate to 3-hydroxy-2-oxo-4-phosphonooxybutanoate. The chain is Erythronate-4-phosphate dehydrogenase from Shigella boydii serotype 4 (strain Sb227).